The following is a 176-amino-acid chain: MCSMWLMASWLMAFVAGSTLADYCGDHKVPFGMEVHKNGNVNILCSRPSCHEKKYAECPERATSTTCSTNSSWVGGVTQHSDGSLRLMCCEYDLLPTYSTIQYEKLTIRTGEYFEGDEQMEGDVVTAFDLIGNIEQVKEPDGKYSYNLLIYRYHCGNIPDTPPAWYMKKQWPYWEK.

An N-terminal signal peptide occupies residues 1 to 21 (MCSMWLMASWLMAFVAGSTLA). An N-linked (GlcNAc...) asparagine glycan is attached at N70.

Expressed in seam cells, excretory cell, reproductive system, pharynx, pharyngeal-intestinal valve cells, neurons and neuronal support cells.

The protein resides in the secreted. In terms of biological role, intercellular signal essential for a variety of patterning events during development. The protein is Warthog protein 5 (wrt-5) of Caenorhabditis elegans.